Here is a 544-residue protein sequence, read N- to C-terminus: Pentatricopeptide repeat-containing protein At1g66345, mitochondrial (544 aa).

The N-terminal 116 residues, 1 to 116 (MASALRRLVE…RNLRHGIKSY (116 aa)), are a transit peptide targeting the mitochondrion. 11 PPR repeats span residues 163-197 (TPLV…GFTL), 198-232 (SVIT…RIYP), 233-267 (NEIT…RCLP), 268-302 (SVIV…NMVV), 303-337 (DTIG…GFSA), 338-372 (NSFV…GVSP), 373-407 (YDET…GLMP), 408-442 (SCSA…GFVP), 443-477 (DEHT…KMSP), 478-512 (GFEV…LIEP), and 513-544 (NADI…ISVR).

It belongs to the PPR family. P subfamily.

Its subcellular location is the mitochondrion. In Arabidopsis thaliana (Mouse-ear cress), this protein is Pentatricopeptide repeat-containing protein At1g66345, mitochondrial.